The primary structure comprises 652 residues: MAGVGFAAHRLELLASYQDVIGEDSPTDWALYTYEDGSDDLKLAASGGGGLLELSGHFEIQKVMYGFCSVKEPQAVLPKYVLVNWVGEDVPDARKCACASHVAKIAEFFQGVDVIVNASSVEDIDPGAIGQRLSNGLARVSSPVLHRLRLREDENAEPVGTTYQKTDATVEMKRLNREQFWEQAKKEEELRKEEERKKALDARLRFEQERMEQERLEQEERERRYREREEQIEEHRRKQQSMEAEEARQRLKEQSIFGEQQEEDDRQQLRKSESEVEEAAAIIAQRPDNPREFFKQQERVASGSGDAISPGSHRTGRLHCPFIKTADSGPPSSSSSSSSPPRTPFPYITCHRTPNLSSFFPCSQSDYRKVSAAGCSPCESSPASTPLGEQRTRAPAEETPATPKDSPSPSTQVAEPAATEQHWPFPGPEDKAAEPPGDEPDPDPRPAWTAGADVLGDLVTLEPSEPSPAPAASEPQPVETPGVAEPLIELWQSDGAAPAATSTWPLPDTPAGPPVPPEEGTLLGLDELPEPPATFCDAEQHEEVEEEEEEEEATAGEPHPTGLGYQEGYQEGPEVPPITNGEMGPKDGTAGRGEQASEGYFSQSQEEEAPPPEEPSAKAPQPVFYNKPPEIDITCWDTDPLPEEEESFGGGL.

Alanine 2 bears the N-acetylalanine mark. An ADF-H domain is found at 5 to 134; that stretch reads GFAAHRLELL…DPGAIGQRLS (130 aa). 2 stretches are compositionally biased toward basic and acidic residues: residues 211–236 and 288–298; these read MEQERLEQEERERRYREREEQIEEHR and DNPREFFKQQE. Disordered regions lie at residues 211–350 and 371–652; these read MEQE…YITC and SAAG…GGGL. The span at 328–340 shows a compositional bias: low complexity; it reads SGPPSSSSSSSSP. Residues 507-517 show a composition bias toward pro residues; it reads PDTPAGPPVPP. Composition is skewed to acidic residues over residues 540-554 and 640-652; these read QHEEVEEEEEEEEAT and PLPEEEESFGGGL.

Brain neurons.

It is found in the cytoplasm. The protein localises to the cell projection. The protein resides in the dendrite. It localises to the cell cortex. Its subcellular location is the cell junction. It is found in the growth cone. Its function is as follows. Actin cytoskeleton-organizing protein that plays a role in the formation of cell projections. Plays a role in dendritic spine morphogenesis and organization, including the localization of the dopamine receptor DRD1 to the dendritic spines. Involved in synaptic plasticity. The sequence is that of Drebrin (DBN1) from Gallus gallus (Chicken).